We begin with the raw amino-acid sequence, 569 residues long: MKDLKLSNFKGKFISRTSHWGLTGKKLRYFITIASMTGFSLFGYDQGLMASLITGKQFNYEFPATKENGDHDRHATVVQGATTSCYELGCFAGSLFVMFCGERIGRKPLILMGSVITIIGAVISTCAFRGYWALGQFIIGRVVTGVGTGLNTSTIPVWQSEMSKAENRGLLVNLEGSTIAFGTMIAYWIDFGLSYTNSSVQWRFPVSMQIVFALFLLAFMIKLPESPRWLISQSRTEEARYLVGTLDDADPNDEEVITEVAMLHDAVNRTKHEKHSLSSLFSRGRSQNLQRALIAASTQFFQQFTGCNAAIYYSTVLFNKTIKLDYRLSMIIGGVFATIYALSTIGSFFLIEKLGRRKLFLLGATGQAVSFTITFACLVKENKENARGAAVGLFLFITFFGLSLLSLPWIYPPEIASMKVRASTNAFSTCTNWLCNFAVVMFTPIFIGQSGWGCYLFFAVMNYLYIPVIFFFYPETAGRSLEEIDIIFAKAYEDGTQPWRVANHLPKLSLQEVEDHANALGSYDDEMEKEDFGEDRVEDTYNQINGDNSSSSSNIKNEDTVNDKANFEG.

Residues 1 to 29 are Cytoplasmic-facing; the sequence is MKDLKLSNFKGKFISRTSHWGLTGKKLRY. A helical membrane pass occupies residues 30–50; the sequence is FITIASMTGFSLFGYDQGLMA. The Extracellular segment spans residues 51–79; the sequence is SLITGKQFNYEFPATKENGDHDRHATVVQ. Residues 80 to 100 traverse the membrane as a helical segment; that stretch reads GATTSCYELGCFAGSLFVMFC. At 101-107 the chain is on the cytoplasmic side; that stretch reads GERIGRK. A helical membrane pass occupies residues 108–128; sequence PLILMGSVITIIGAVISTCAF. Position 129 (R129) is a topological domain, extracellular. A helical membrane pass occupies residues 130 to 150; that stretch reads GYWALGQFIIGRVVTGVGTGL. Over 151–168 the chain is Cytoplasmic; the sequence is NTSTIPVWQSEMSKAENR. A helical transmembrane segment spans residues 169-189; that stretch reads GLLVNLEGSTIAFGTMIAYWI. Over 190–203 the chain is Extracellular; sequence DFGLSYTNSSVQWR. N197 carries an N-linked (GlcNAc...) asparagine glycan. A helical transmembrane segment spans residues 204 to 224; the sequence is FPVSMQIVFALFLLAFMIKLP. The Cytoplasmic segment spans residues 225-291; it reads ESPRWLISQS…SRGRSQNLQR (67 aa). A helical transmembrane segment spans residues 292–312; it reads ALIAASTQFFQQFTGCNAAIY. Residues 313–330 lie on the Extracellular side of the membrane; sequence YSTVLFNKTIKLDYRLSM. N319 is a glycosylation site (N-linked (GlcNAc...) asparagine). The helical transmembrane segment at 331-351 threads the bilayer; the sequence is IIGGVFATIYALSTIGSFFLI. Over 352–358 the chain is Cytoplasmic; it reads EKLGRRK. A helical transmembrane segment spans residues 359–379; the sequence is LFLLGATGQAVSFTITFACLV. Residues 380–389 lie on the Extracellular side of the membrane; that stretch reads KENKENARGA. The helical transmembrane segment at 390–410 threads the bilayer; sequence AVGLFLFITFFGLSLLSLPWI. Residues 411–426 lie on the Cytoplasmic side of the membrane; that stretch reads YPPEIASMKVRASTNA. A helical transmembrane segment spans residues 427 to 447; the sequence is FSTCTNWLCNFAVVMFTPIFI. Residues 448-453 are Extracellular-facing; sequence GQSGWG. A helical membrane pass occupies residues 454-474; that stretch reads CYLFFAVMNYLYIPVIFFFYP. At 475–569 the chain is on the cytoplasmic side; it reads ETAGRSLEEI…TVNDKANFEG (95 aa). The span at 524 to 533 shows a compositional bias: acidic residues; that stretch reads DDEMEKEDFG. Residues 524–569 form a disordered region; the sequence is DDEMEKEDFGEDRVEDTYNQINGDNSSSSSNIKNEDTVNDKANFEG. A compositionally biased stretch (basic and acidic residues) spans 556–569; sequence KNEDTVNDKANFEG.

It belongs to the major facilitator superfamily. Sugar transporter (TC 2.A.1.1) family.

The protein localises to the membrane. The polypeptide is Sugar transporter STL1 (STL1) (Saccharomyces cerevisiae (strain ATCC 204508 / S288c) (Baker's yeast)).